A 182-amino-acid polypeptide reads, in one-letter code: Malignant T-cell-amplified sequence 1 homolog (182 aa).

One can recognise a PUA domain in the interval 93-172 (VTMQQVDKGA…IGIETYHFLN (80 aa)).

It belongs to the MCTS1 family. In terms of assembly, interacts with DENR.

The protein resides in the cytoplasm. Functionally, regulates translation as part of a complex with DENR. Specifically required for translational re-initiation in mRNAs containing upstream open reading frames (uORFs). Not required for standard translational initiation. Regulates expression of a subset of gene products including mbc, InR and EcR. In Drosophila melanogaster (Fruit fly), this protein is Malignant T-cell-amplified sequence 1 homolog.